A 340-amino-acid chain; its full sequence is Phosphoribosylformylglycinamidine cyclo-ligase (340 aa).

The protein belongs to the AIR synthase family.

Its subcellular location is the cytoplasm. The enzyme catalyses 2-formamido-N(1)-(5-O-phospho-beta-D-ribosyl)acetamidine + ATP = 5-amino-1-(5-phospho-beta-D-ribosyl)imidazole + ADP + phosphate + H(+). It participates in purine metabolism; IMP biosynthesis via de novo pathway; 5-amino-1-(5-phospho-D-ribosyl)imidazole from N(2)-formyl-N(1)-(5-phospho-D-ribosyl)glycinamide: step 2/2. The protein is Phosphoribosylformylglycinamidine cyclo-ligase of Streptococcus pneumoniae serotype 2 (strain D39 / NCTC 7466).